A 123-amino-acid chain; its full sequence is UPF0102 protein CLD_2200 (123 aa).

The protein belongs to the UPF0102 family.

This Clostridium botulinum (strain Okra / Type B1) protein is UPF0102 protein CLD_2200.